A 262-amino-acid polypeptide reads, in one-letter code: Tryptophan synthase alpha chain (262 aa).

Active-site proton acceptor residues include Glu49 and Asp60.

It belongs to the TrpA family. Tetramer of two alpha and two beta chains.

It carries out the reaction (1S,2R)-1-C-(indol-3-yl)glycerol 3-phosphate + L-serine = D-glyceraldehyde 3-phosphate + L-tryptophan + H2O. It functions in the pathway amino-acid biosynthesis; L-tryptophan biosynthesis; L-tryptophan from chorismate: step 5/5. Functionally, the alpha subunit is responsible for the aldol cleavage of indoleglycerol phosphate to indole and glyceraldehyde 3-phosphate. The polypeptide is Tryptophan synthase alpha chain (Aquifex aeolicus (strain VF5)).